Consider the following 86-residue polypeptide: DNA-directed RNA polymerase subunit omega (86 aa).

The protein belongs to the RNA polymerase subunit omega family. The RNAP catalytic core consists of 2 alpha, 1 beta, 1 beta' and 1 omega subunit. When a sigma factor is associated with the core the holoenzyme is formed, which can initiate transcription.

It catalyses the reaction RNA(n) + a ribonucleoside 5'-triphosphate = RNA(n+1) + diphosphate. Promotes RNA polymerase assembly. Latches the N- and C-terminal regions of the beta' subunit thereby facilitating its interaction with the beta and alpha subunits. The chain is DNA-directed RNA polymerase subunit omega from Agathobacter rectalis (strain ATCC 33656 / DSM 3377 / JCM 17463 / KCTC 5835 / VPI 0990) (Eubacterium rectale).